Here is a 436-residue protein sequence, read N- to C-terminus: MSWQGHEGPKVKLRSACDRCSANKVKCTQEKPECERCRLLSLPCNYSRSMRIGKPPKSRQRGLSNIDPKTLMGGTVTKKLRPCPSAPESACRGSFEDGDGGPWTETMTFEEMLSRPSPPPFAGPSHNSNRPTNMASTNQDQYYHDKGKHGETMDEMLQTLVPDSVQFIEFPNTAREDQKQHPELRSEEEYSDYRSKSLFEEGLARIAPDCAGGIMDVLYGEEALVQMPNLPSSTHEGSSNTHVTSSHNCTRAVMENLAKLYQVCAPAGVENGSHPTTDQVLKANSDAMKDAADLLACPCAKDFCFPIILGITACRVLAWYQVVIDMYDPEIPMATMPTAREDIKHCPIAFGAYQLDEEVSQAMTSQFVLRNLRAMTRFVKTYVENFCSDINKNRPGSCSLIYRSLGTFMQTRLGNTIEQLEDRLAAFDGEYTKNIG.

Residues cysteine 17–cysteine 44 constitute a DNA-binding region (zn(2)-C6 fungal-type). 2 disordered regions span residues arginine 51–glycine 147 and threonine 173–aspartate 192. Residues serine 125 to glutamine 141 are compositionally biased toward polar residues. Positions alanine 174 to aspartate 192 are enriched in basic and acidic residues.

It is found in the nucleus. Its function is as follows. Transcription factor that regulates expression of the viriditoxin biosynthesis cluster and viriditoxin synthesis. In Byssochlamys spectabilis (Paecilomyces variotii), this protein is Transcriptional regulator VdtR.